Reading from the N-terminus, the 65-residue chain is Large ribosomal subunit protein bL35 (65 aa).

Positions 1 to 25 (MPKLKTKSSAAKRFKKTGKGGFKHR) are disordered.

Belongs to the bacterial ribosomal protein bL35 family.

This is Large ribosomal subunit protein bL35 from Francisella tularensis subsp. holarctica (strain FTNF002-00 / FTA).